The sequence spans 437 residues: Probable glycine dehydrogenase (decarboxylating) subunit 1 (437 aa).

This sequence belongs to the GcvP family. N-terminal subunit subfamily. The glycine cleavage system is composed of four proteins: P, T, L and H. In this organism, the P 'protein' is a heterodimer of two subunits.

The enzyme catalyses N(6)-[(R)-lipoyl]-L-lysyl-[glycine-cleavage complex H protein] + glycine + H(+) = N(6)-[(R)-S(8)-aminomethyldihydrolipoyl]-L-lysyl-[glycine-cleavage complex H protein] + CO2. Its function is as follows. The glycine cleavage system catalyzes the degradation of glycine. The P protein binds the alpha-amino group of glycine through its pyridoxal phosphate cofactor; CO(2) is released and the remaining methylamine moiety is then transferred to the lipoamide cofactor of the H protein. The protein is Probable glycine dehydrogenase (decarboxylating) subunit 1 of Thermotoga petrophila (strain ATCC BAA-488 / DSM 13995 / JCM 10881 / RKU-1).